The following is a 204-amino-acid chain: Recombination protein RecR (204 aa).

The C4-type zinc-finger motif lies at 63 to 78 (CRICCNVADSELCPIC). Residues 86-181 (NKICVVEQPQ…KVTRLARGLP (96 aa)) form the Toprim domain.

It belongs to the RecR family.

Its function is as follows. May play a role in DNA repair. It seems to be involved in an RecBC-independent recombinational process of DNA repair. It may act with RecF and RecO. In Dehalococcoides mccartyi (strain ATCC BAA-2100 / JCM 16839 / KCTC 5957 / BAV1), this protein is Recombination protein RecR.